A 271-amino-acid polypeptide reads, in one-letter code: Calretinin (271 aa).

EF-hand domains are found at residues 16–51, 63–98, 107–142, 151–186, 195–230, and 235–270; these read LTATQFLEIWKHFDADGNGYIEGKELENFFQELEKA, NLGEKMKEFMQKYDKNSDGKIEMAELAQILPTEENF, GSSTEFMEAWRKYDTDRSGYIEANELKGFLSDLLKK, KLQEYTQTILRMFDLNGDGKLGLSEMSRLLPVQENF, LTSEEFNAIFTFYDKDGSGYIDENELDALLKDLYEK, and MNIQQLTSYRKSVMSLAEAEKLYRKDLEIVLCSEPP. The Ca(2+) site is built by Asp29, Asp31, Asn33, Tyr35, Glu40, Asp76, Asn78, Asp80, Lys82, Glu87, Asp120, Asp122, Ser124, Tyr126, Glu131, Asp164, Asn166, Asp168, Lys170, Glu175, Asp208, Asp210, Ser212, Tyr214, and Glu219. The residue at position 214 (Tyr214) is a Phosphotyrosine.

This sequence belongs to the calbindin family.

Its subcellular location is the synapse. It localises to the cell projection. The protein resides in the dendrite. Calcium-binding protein involved in calcium homeostasis and signal transduction. It plays a critical role in buffering intracellular calcium levels and modulating calcium-dependent signaling pathways. Predominantly expressed in specific neuronal populations, influences synaptic plasticity and neuronal excitability, contributing to learning and memory. During embryonic development, it facilitates neuronal differentiation and maturation. The chain is Calretinin (CALB2) from Bos taurus (Bovine).